The chain runs to 310 residues: Urease accessory protein UreD (310 aa).

It belongs to the UreD family. As to quaternary structure, ureD, UreF and UreG form a complex that acts as a GTP-hydrolysis-dependent molecular chaperone, activating the urease apoprotein by helping to assemble the nickel containing metallocenter of UreC. The UreE protein probably delivers the nickel.

It is found in the cytoplasm. Its function is as follows. Required for maturation of urease via the functional incorporation of the urease nickel metallocenter. The protein is Urease accessory protein UreD of Synechococcus sp. (strain RCC307).